Reading from the N-terminus, the 1581-residue chain is Mediator of RNA polymerase II transcription subunit 1 (1581 aa).

The tract at residues 1 to 670 is interaction with the Mediator complex and THRA; it reads MKAQGETEES…YGSSPLERQN (670 aa). The interval 16-590 is interaction with ESR1; the sequence is MSSLLERLHA…SIKDRHESVG (575 aa). Interaction with the Mediator complex stretches follow at residues 108 to 212 and 215 to 390; these read FYVE…GYLT and SGGH…SLQG. The interval 405-644 is interaction with THRA; the sequence is PLILNLIRHQ…MAGNTKNHPM (240 aa). Positions 542–789 are interaction with VDR; sequence PASSPGYGMT…TDILSDIAEE (248 aa). Serine 588 is modified (phosphoserine). The short motif at 604–608 is the LXXLL motif 1 element; that stretch reads LTSLL. 4 disordered regions span residues 609–705, 792–820, 874–893, and 948–1566; these read QITG…HQTE, KLPS…QSTL, SQSG…GDND, and EHHS…DFMI. Pro residues predominate over residues 622–632; the sequence is PTPPHHTPPPV. The segment at 622–701 is interaction with PPARGC1A and THRA; sequence PTPPHHTPPP…SSRLPPEKPK (80 aa). The short motif at 645 to 649 is the LXXLL motif 2 element; sequence LMNLL. Over residues 655–675 the composition is skewed to polar residues; sequence QDFSTLYGSSPLERQNSSSGS. The interaction with ESR1 stretch occupies residues 656 to 1066; it reads DFSTLYGSSP…TPPIPKITIQ (411 aa). A Phosphoserine modification is found at serine 664. The tract at residues 681–715 is interaction with GATA1; that stretch reads CSGSNKTKKKKSSRLPPEKPKHQTEDDFQRELFSM. Residues 696–705 are compositionally biased toward basic and acidic residues; it reads PPEKPKHQTE. Serine 795 carries the post-translational modification Phosphoserine. Threonine 805 is modified (phosphothreonine). Positions 808–820 are enriched in polar residues; sequence RDSSSSGHSQSTL. Positions 875–902 match the Integrase domain-binding motif (IBM) motif; it reads QSGFGEEYFDESSQSGDNDDFKGFASQA. Phosphoserine is present on residues serine 887 and serine 953. Residues 963 to 974 are compositionally biased toward basic and acidic residues; sequence LGKEKTQKRVKE. Phosphothreonine; by MAPK1 or MAPK3 is present on threonine 1032. Positions 1034-1045 are enriched in low complexity; it reads PTSTGGSKSPGS. Residues threonine 1051 and threonine 1057 each carry the phosphothreonine modification. 2 stretches are compositionally biased toward low complexity: residues 1078–1094 and 1101–1156; these read SSHS…SSGS and SSSS…PGSS. Serine 1156 is modified (phosphoserine). Polar residues predominate over residues 1162–1195; sequence GLSSGSSSTKMKPQGKPSSLMNPSLSKPNISPSH. Position 1177 is an N6-acetyllysine (lysine 1177). The residue at position 1207 (serine 1207) is a Phosphoserine. Phosphothreonine is present on threonine 1215. 2 stretches are compositionally biased toward low complexity: residues 1218 to 1227 and 1234 to 1293; these read SSKAKSPISS and MSGT…SKGK. Serine 1223 is subject to Phosphoserine. The interval 1249–1421 is interaction with TP53; the sequence is LGSSGSLSQK…KPGESSGEGL (173 aa). Residue serine 1302 is modified to Phosphoserine. Residues 1330–1345 are compositionally biased toward polar residues; that stretch reads GVSTNSSSHPMSSKHN. Phosphoserine is present on serine 1347. A compositionally biased stretch (basic and acidic residues) spans 1352–1364; that stretch reads QGKREKSDKDKSK. A phosphoserine mark is found at serine 1403 and serine 1433. Polar residues-rich tracts occupy residues 1425–1440 and 1448–1482; these read MASS…SGST and PSHS…SPSS. Threonine 1440 is subject to Phosphothreonine. Threonine 1457 carries the phosphothreonine; by MAPK1 or MAPK3 modification. 5 positions are modified to phosphoserine: serine 1463, serine 1465, serine 1479, serine 1481, and serine 1482. Positions 1496 to 1505 are enriched in basic residues; the sequence is KHKKHKKEKK. A compositionally biased stretch (basic and acidic residues) spans 1506–1522; the sequence is KVKDKDRDRDRDKDRDK. An N6-acetyllysine modification is found at lysine 1529. The segment covering 1533-1552 has biased composition (polar residues); sequence WSKSPISSDQSLSMTSNTIL.

It belongs to the Mediator complex subunit 1 family. As to quaternary structure, component of the Mediator complex, which is composed of MED1, MED4, MED6, MED7, MED8, MED9, MED10, MED11, MED12, MED13, MED13L, MED14, MED15, MED16, MED17, MED18, MED19, MED20, MED21, MED22, MED23, MED24, MED25, MED26, MED27, MED29, MED30, MED31, CCNC, CDK8 and CDC2L6/CDK11. The MED12, MED13, CCNC and CDK8 subunits form a distinct module termed the CDK8 module. Mediator containing the CDK8 module is less active than Mediator lacking this module in supporting transcriptional activation. Individual preparations of the Mediator complex lacking one or more distinct subunits have been variously termed ARC, CRSP, DRIP, PC2, SMCC and TRAP. This subunit specifically interacts with a number of nuclear receptors in a ligand-dependent fashion including AR, ESR1, ESR2, PPARA, PPARG, RORA, RXRA, RXRG, THRA, THRB and VDR. Interacts with CTNNB1, GABPA, GLI3, PPARGC1A and TP53. Interacts with YWHAH. Interacts with CLOCK; this interaction requires the presence of THRAP3. Interacts with GATA1 and CCAR1. Interacts with NR4A3. Interacts (via IBM motif) with PSIP1 (via IBD domain); phosphorylation increases its affinity for PSIP1. Interacts with USP22. Phosphorylated by MAPK1 or MAPK3 during G2/M phase which may enhance protein stability and promote entry into the nucleolus. Phosphorylation increases its interaction with PSIP1. As to expression, ubiquitously expressed.

The protein localises to the nucleus. In terms of biological role, component of the Mediator complex, a coactivator involved in the regulated transcription of nearly all RNA polymerase II-dependent genes. Mediator functions as a bridge to convey information from gene-specific regulatory proteins to the basal RNA polymerase II transcription machinery. Mediator is recruited to promoters by direct interactions with regulatory proteins and serves as a scaffold for the assembly of a functional preinitiation complex with RNA polymerase II and the general transcription factors. Acts as a coactivator for GATA1-mediated transcriptional activation during erythroid differentiation of K562 erythroleukemia cells. The protein is Mediator of RNA polymerase II transcription subunit 1 (MED1) of Homo sapiens (Human).